The sequence spans 505 residues: Acetylcholine receptor subunit beta (505 aa).

The N-terminal stretch at 1–24 (MTPGALLLLLLGVLGAHLAPGARG) is a signal peptide. Residues 25–245 (SEAEGRLREK…VTFYLIIRRK (221 aa)) lie on the Extracellular side of the membrane. A disulfide bridge connects residues Cys152 and Cys166. The N-linked (GlcNAc...) asparagine glycan is linked to Asn165. The next 3 helical transmembrane spans lie at 246–270 (PLFY…VFYL), 278–295 (MGLS…LLLL), and 312–333 (YLMF…VLNL). Topologically, residues 334–473 (HHRSPHTHQM…WQFVAMVVDR (140 aa)) are cytoplasmic. The tract at residues 365-391 (KPERDQMQEPPSIAPRDSPGSGWGRGT) is disordered. The residue at position 394 (Tyr394) is a Phosphotyrosine; by Tyr-kinases. The chain crosses the membrane as a helical span at residues 474 to 492 (LFLWTFIIFTSVGTLVIFL).

The protein belongs to the ligand-gated ion channel (TC 1.A.9) family. Acetylcholine receptor (TC 1.A.9.1) subfamily. Beta-1/CHRNB1 sub-subfamily. In terms of assembly, pentamer of two alpha chains, and one each of the beta, delta, and gamma (in immature muscle) or epsilon (in mature muscle) chains. The muscle heteropentamer composed of alpha-1, beta-1, delta, epsilon subunits interacts with the alpha-conotoxin ImII.

The protein resides in the postsynaptic cell membrane. Its subcellular location is the cell membrane. It catalyses the reaction K(+)(in) = K(+)(out). The enzyme catalyses Na(+)(in) = Na(+)(out). Its function is as follows. After binding acetylcholine, the AChR responds by an extensive change in conformation that affects all subunits and leads to opening of an ion-conducting channel across the plasma membrane. This is Acetylcholine receptor subunit beta (CHRNB1) from Bos taurus (Bovine).